A 689-amino-acid chain; its full sequence is Beta-adrenergic receptor kinase 1 (689 aa).

An N-terminal region spans residues 1 to 190; sequence MADLEAVLAD…ELNIHLTMND (190 aa). One can recognise an RGS domain in the interval 54–175; that stretch reads TFEKIFSQKL…IESDKFTRFC (122 aa). The region spanning 191–453 is the Protein kinase domain; sequence FSVHRIIGRG…AQEVKESPFF (263 aa). Residues 197–205 and K220 contribute to the ATP site; that span reads IGRGGFGEV. D317 functions as the Proton acceptor in the catalytic mechanism. Residues 454-521 enclose the AGC-kinase C-terminal domain; it reads RSLDWQMVFL…TISERWQQEV (68 aa). Positions 558-652 constitute a PH domain; sequence DCIVHGYMSK…WKKELRDAYR (95 aa). S670 carries the phosphoserine modification.

It belongs to the protein kinase superfamily. AGC Ser/Thr protein kinase family. GPRK subfamily. As to quaternary structure, interacts with the heterodimer formed by GNB1 and GNG2. Interacts with GIT1. Interacts with, and phosphorylates chemokine-stimulated CCR5. Interacts with ARRB1. Interacts with LPAR1 and LPAR2. Interacts with RALA in response to LPAR1 activation. ADRBK1 and RALA mutually inhibit each other's binding to LPAR1. Interacts with ADRB2.

It is found in the cytoplasm. Its subcellular location is the cell membrane. It localises to the postsynapse. The protein resides in the presynapse. The catalysed reaction is [beta-adrenergic receptor] + ATP = [beta-adrenergic receptor]-phosphate + ADP + H(+). With respect to regulation, in contrast to other AGC family kinases, the catalytic activity is solely regulated by the binding of substrates and ligands, not by phosphorylation of the kinase domain. Its function is as follows. Specifically phosphorylates the agonist-occupied form of the beta-adrenergic and closely related receptors, probably inducing a desensitization of them. Key regulator of LPAR1 signaling. Competes with RALA for binding to LPAR1 thus affecting the signaling properties of the receptor. Desensitizes LPAR1 and LPAR2 in a phosphorylation-independent manner. Positively regulates ciliary smoothened (SMO)-dependent Hedgehog (Hh) signaling pathway by facilitating the trafficking of SMO into the cilium and the stimulation of SMO activity. Inhibits relaxation of airway smooth muscle in response to blue light. The sequence is that of Beta-adrenergic receptor kinase 1 from Mus musculus (Mouse).